The following is a 72-amino-acid chain: MPMSLDSLAVGMVALLVDYYSKALRASLNSTGIDRRWGDQWPSTVELTGRGVIEWESPTFCICSSSRSTAIV.

The sequence is that of Putative ORF1 protein (ORF1) from Leishmania RNA virus 1 - 1 (isolate Leishmania guyanensis) (LRV-1-1).